The following is a 108-amino-acid chain: UPF0060 membrane protein YnfA (108 aa).

Topologically, residues 1–5 (MIKTT) are periplasmic. A helical transmembrane segment spans residues 6-26 (LLFFATALCEIIGCFLPWLWL). The Cytoplasmic segment spans residues 27–30 (KRNA). The chain crosses the membrane as a helical span at residues 31–51 (SIWLLLPAGISLALFVWLLTL). Residues 52-60 (HPAASGRVY) lie on the Periplasmic side of the membrane. A helical membrane pass occupies residues 61-81 (AAYGGVYVCTALMWLRVVDGV). The Cytoplasmic portion of the chain corresponds to 82 to 84 (KLT). Residues 85-105 (LYDWTGPLIALCGMLIIVVGW) form a helical membrane-spanning segment. Topologically, residues 106–108 (GRT) are periplasmic.

Belongs to the UPF0060 family.

The protein localises to the cell inner membrane. This is UPF0060 membrane protein YnfA from Escherichia coli O157:H7.